The chain runs to 96 residues: Essential MCU regulator, mitochondrial (96 aa).

Residues 1 to 34 (MIVSRLTFPLQAAKLVARKAAGNPSNSIIQRRHM) constitute a mitochondrion transit peptide. A helical transmembrane segment spans residues 52–72 (PFGLFAIFCAVIPGLFIGATI).

It belongs to the SMDT1/EMRE family.

It is found in the mitochondrion inner membrane. Its function is as follows. Essential regulatory subunit of the mitochondrial calcium uniporter (mcu) channel, a protein that mediates calcium uptake into mitochondria. This Drosophila pseudoobscura pseudoobscura (Fruit fly) protein is Essential MCU regulator, mitochondrial.